A 360-amino-acid polypeptide reads, in one-letter code: Phospho-N-acetylmuramoyl-pentapeptide-transferase (360 aa).

10 helical membrane-spanning segments follow: residues 25–45 (RGIL…PWLI), 74–94 (MGGA…ADLA), 97–117 (YVWV…VDDY), 132–152 (WKYF…YMTA), 168–188 (IEIP…VGSS), 199–219 (GLAI…CYLS), 236–256 (SGEL…FLWF), 263–283 (VFMG…IAVI), 288–308 (VVLF…MIQV), and 338–358 (VIVR…ATLK).

The protein belongs to the glycosyltransferase 4 family. MraY subfamily. It depends on Mg(2+) as a cofactor.

It localises to the cell inner membrane. It carries out the reaction UDP-N-acetyl-alpha-D-muramoyl-L-alanyl-gamma-D-glutamyl-meso-2,6-diaminopimeloyl-D-alanyl-D-alanine + di-trans,octa-cis-undecaprenyl phosphate = di-trans,octa-cis-undecaprenyl diphospho-N-acetyl-alpha-D-muramoyl-L-alanyl-D-glutamyl-meso-2,6-diaminopimeloyl-D-alanyl-D-alanine + UMP. The protein operates within cell wall biogenesis; peptidoglycan biosynthesis. Catalyzes the initial step of the lipid cycle reactions in the biosynthesis of the cell wall peptidoglycan: transfers peptidoglycan precursor phospho-MurNAc-pentapeptide from UDP-MurNAc-pentapeptide onto the lipid carrier undecaprenyl phosphate, yielding undecaprenyl-pyrophosphoryl-MurNAc-pentapeptide, known as lipid I. The chain is Phospho-N-acetylmuramoyl-pentapeptide-transferase from Stutzerimonas stutzeri (strain A1501) (Pseudomonas stutzeri).